The primary structure comprises 347 residues: Phosphate acyltransferase (347 aa).

This sequence belongs to the PlsX family. As to quaternary structure, homodimer. Probably interacts with PlsY.

It is found in the cytoplasm. The enzyme catalyses a fatty acyl-[ACP] + phosphate = an acyl phosphate + holo-[ACP]. The protein operates within lipid metabolism; phospholipid metabolism. Its function is as follows. Catalyzes the reversible formation of acyl-phosphate (acyl-PO(4)) from acyl-[acyl-carrier-protein] (acyl-ACP). This enzyme utilizes acyl-ACP as fatty acyl donor, but not acyl-CoA. This Lawsonia intracellularis (strain PHE/MN1-00) protein is Phosphate acyltransferase.